Consider the following 229-residue polypeptide: Histone H1 (229 aa).

Disordered regions lie at residues 1–52 (MADT…SSHP) and 125–229 (APAL…RTRK). Positions 32-45 (KEKKKVIAAKKPKS) are enriched in basic residues. An H15 domain is found at 50-119 (SHPSFFEMIS…KVKNSFKLPS (70 aa)). A compositionally biased stretch (low complexity) spans 125–138 (APALAKKPTIPKPK). Positions 139-160 (VAAKPKTAKIGAKPKAKAKVAA) are enriched in basic residues. Composition is skewed to low complexity over residues 161 to 177 (KTKATTKTVAKKIPAAK) and 185 to 205 (KPKTVAAKPAKVAKTAAVASP). The segment covering 206-229 (GKKKAVPVKKVKTVKSPAGKRTRK) has biased composition (basic residues).

This sequence belongs to the histone H1/H5 family.

Its subcellular location is the nucleus. The protein localises to the chromosome. Histones H1 are necessary for the condensation of nucleosome chains into higher-order structures. The protein is Histone H1 of Euphorbia esula (Leafy spurge).